Consider the following 225-residue polypeptide: Thymidylate kinase (225 aa).

10 to 17 (GPEGAGKT) is a binding site for ATP.

The protein belongs to the thymidylate kinase family.

It catalyses the reaction dTMP + ATP = dTDP + ADP. Its function is as follows. Phosphorylation of dTMP to form dTDP in both de novo and salvage pathways of dTTP synthesis. This Geobacillus thermodenitrificans (strain NG80-2) protein is Thymidylate kinase.